A 238-amino-acid chain; its full sequence is tRNA (guanine-N(1)-)-methyltransferase (238 aa).

Residues G110 and 129–134 each bind S-adenosyl-L-methionine; that span reads LGDFIL.

The protein belongs to the RNA methyltransferase TrmD family. In terms of assembly, homodimer.

The protein localises to the cytoplasm. It catalyses the reaction guanosine(37) in tRNA + S-adenosyl-L-methionine = N(1)-methylguanosine(37) in tRNA + S-adenosyl-L-homocysteine + H(+). In terms of biological role, specifically methylates guanosine-37 in various tRNAs. The sequence is that of tRNA (guanine-N(1)-)-methyltransferase from Clostridium botulinum (strain Alaska E43 / Type E3).